A 443-amino-acid chain; its full sequence is Thymidine phosphorylase (443 aa).

This sequence belongs to the thymidine/pyrimidine-nucleoside phosphorylase family. As to quaternary structure, homodimer.

It catalyses the reaction thymidine + phosphate = 2-deoxy-alpha-D-ribose 1-phosphate + thymine. It functions in the pathway pyrimidine metabolism; dTMP biosynthesis via salvage pathway; dTMP from thymine: step 1/2. Its function is as follows. The enzymes which catalyze the reversible phosphorolysis of pyrimidine nucleosides are involved in the degradation of these compounds and in their utilization as carbon and energy sources, or in the rescue of pyrimidine bases for nucleotide synthesis. This chain is Thymidine phosphorylase, found in Shewanella amazonensis (strain ATCC BAA-1098 / SB2B).